The chain runs to 536 residues: Inactive phospholipase D5 (536 aa).

The chain crosses the membrane as a helical span at residues 69–89 (IVIFALVCCFAILVALIFSAV). A glycan (N-linked (GlcNAc...) asparagine) is linked at Asn-121. The PLD phosphodiesterase 1 domain maps to 215–242 (NKGRLQSSFWIVDKQHVYIGSAGLDWQS). N-linked (GlcNAc...) asparagine glycosylation occurs at Asn-302. Residues 434–460 (FPRLNRNKYMVTDGAAYIGNFDWVGND) enclose the PLD phosphodiesterase 2 domain.

It belongs to the phospholipase D family.

It localises to the membrane. In Homo sapiens (Human), this protein is Inactive phospholipase D5 (PLD5).